We begin with the raw amino-acid sequence, 239 residues long: tRNA (guanine-N(7)-)-methyltransferase (239 aa).

4 residues coordinate S-adenosyl-L-methionine: Glu-69, Glu-94, Asp-121, and Asp-144. Asp-144 is a catalytic residue. Lys-148 is a binding site for substrate. The segment at 150–155 (RHNKRR) is interaction with RNA. Residues Asp-180 and 217–220 (TKFE) contribute to the substrate site.

Belongs to the class I-like SAM-binding methyltransferase superfamily. TrmB family. Monomer.

It carries out the reaction guanosine(46) in tRNA + S-adenosyl-L-methionine = N(7)-methylguanosine(46) in tRNA + S-adenosyl-L-homocysteine. The protein operates within tRNA modification; N(7)-methylguanine-tRNA biosynthesis. Its function is as follows. Catalyzes the formation of N(7)-methylguanine at position 46 (m7G46) in tRNA. This is tRNA (guanine-N(7)-)-methyltransferase from Pectobacterium atrosepticum (strain SCRI 1043 / ATCC BAA-672) (Erwinia carotovora subsp. atroseptica).